The chain runs to 190 residues: Peptide deformylase (190 aa).

Fe cation is bound by residues Cys106 and His148. Glu149 is an active-site residue. Residue His152 participates in Fe cation binding.

The protein belongs to the polypeptide deformylase family. It depends on Fe(2+) as a cofactor.

The catalysed reaction is N-terminal N-formyl-L-methionyl-[peptide] + H2O = N-terminal L-methionyl-[peptide] + formate. Its function is as follows. Removes the formyl group from the N-terminal Met of newly synthesized proteins. Requires at least a dipeptide for an efficient rate of reaction. N-terminal L-methionine is a prerequisite for activity but the enzyme has broad specificity at other positions. This is Peptide deformylase from Methylacidiphilum infernorum (isolate V4) (Methylokorus infernorum (strain V4)).